We begin with the raw amino-acid sequence, 214 residues long: Probable transaldolase 1 (214 aa).

Residue lysine 83 is the Schiff-base intermediate with substrate of the active site.

Belongs to the transaldolase family. Type 3B subfamily.

The protein resides in the cytoplasm. It catalyses the reaction D-sedoheptulose 7-phosphate + D-glyceraldehyde 3-phosphate = D-erythrose 4-phosphate + beta-D-fructose 6-phosphate. It participates in carbohydrate degradation; pentose phosphate pathway; D-glyceraldehyde 3-phosphate and beta-D-fructose 6-phosphate from D-ribose 5-phosphate and D-xylulose 5-phosphate (non-oxidative stage): step 2/3. Its function is as follows. Transaldolase is important for the balance of metabolites in the pentose-phosphate pathway. The chain is Probable transaldolase 1 from Listeria monocytogenes serotype 4b (strain F2365).